The sequence spans 1016 residues: DNA polymerase I (1016 aa).

Residues 1–308 form the 5'-3' exonuclease domain; that stretch reads MPNSIWTSSD…MEFTTLTRRV (308 aa). Positions 334-361 are disordered; the sequence is GPDLDAAEPEPVAGGIPEVSGESVPMPP. The 3'-5' exonuclease domain occupies 394–630; it reads SAYVTIRDLV…MEARGITVDR (237 aa). Residues 768–1016 are polymerase; the sequence is GRKIRTAFIS…RAATNWDEAH (249 aa).

It belongs to the DNA polymerase type-A family. Single-chain monomer with multiple functions.

The catalysed reaction is DNA(n) + a 2'-deoxyribonucleoside 5'-triphosphate = DNA(n+1) + diphosphate. In addition to polymerase activity, this DNA polymerase exhibits 3'-5' and 5'-3' exonuclease activity. In Rhizobium leguminosarum, this protein is DNA polymerase I (polA).